Reading from the N-terminus, the 342-residue chain is Vancomycin B-type resistance protein VanB (342 aa).

ATP contacts are provided by residues K132, 168 to 170 (FVK), 176 to 177 (SS), 206 to 213 (EQAISGCE), and F240. The region spanning 136-337 (YILTKNAGIA…LPALIDSLIT (202 aa)) is the ATP-grasp domain. H243 is a binding site for substrate. An ATP-binding site is contributed by 303–304 (NE). Residues E304 and N306 each coordinate Mg(2+).

It belongs to the D-alanine--D-alanine ligase family. Mg(2+) serves as cofactor. The cofactor is Mn(2+).

The protein resides in the cell membrane. It carries out the reaction (R)-lactate + D-alanine + ATP = D-alanyl-(R)-lactate + ADP + phosphate. Functionally, required for high-level resistance to glycopeptides antibiotics. D-Ala--D-Ala ligase of altered specificity which catalyzes ester bond formation between D-Ala and various D-hydroxy acids; producing a peptidoglycan which does not terminate in D-alanine but in D-lactate, thus preventing vancomycin binding. This chain is Vancomycin B-type resistance protein VanB (vanB), found in Enterococcus faecalis (strain ATCC 700802 / V583).